Reading from the N-terminus, the 126-residue chain is Large ribosomal subunit protein eL14 (126 aa).

It belongs to the eukaryotic ribosomal protein eL14 family.

This is Large ribosomal subunit protein eL14 (RPL14) from Tetrahymena thermophila (strain SB210).